The following is a 407-amino-acid chain: MPATILKSTASSKTLLIIKFDTNSSRYPFYKKHLLELNSESTFLGLLTKGQADTSITRLNQDDVRLFEKAKTVADRTKDVAYSFSDPILSTQLRTPPPQPTSIRYLYFGTYRIKPWYTSPYPEEYSCAKNLYICESCLKYMNSDHVLQRHKMKCSWSYPPGDEIYRDKNISIFEVDGQRQPIYCQNLCLLAKMFLHSKMLYYDVEPFLFYVLTEFDGQECKVIGYFSKEKRSASDYNVSCILTLPIYQRRGYGVFLIDFSYLLTQVEGKLGSPEKPLSDLGLVTYRSYWKMRVAKALLEITTPISINAIAKSTSMVCDDVISTLESLSVFKYDPLKKKYVLQLKRDELENVYKAWNIKHPQRVNPKLLRWTPYLGEEQISNLLLKENILIPLPQKRLLDNSHHLDSV.

Positions 98 to 372 (PQPTSIRYLY…VNPKLLRWTP (275 aa)) constitute an MYST-type HAT domain. The C2HC MYST-type zinc finger occupies 131 to 156 (LYICESCLKYMNSDHVLQRHKMKCSW). K198 carries the post-translational modification N6-acetyllysine; by autocatalysis. Acetyl-CoA-binding positions include 241 to 243 (ILT), T243, and 248 to 254 (QRRGYGV). E274 functions as the Proton donor/acceptor in the catalytic mechanism. Residues S278 and S287 each contribute to the acetyl-CoA site.

It belongs to the MYST (SAS/MOZ) family. In terms of assembly, component of the mst2 complex composed of at least eaf6, mst2, nto1, pdp3, ptf1, ptf2 and tfg3. Autoacetylation at Lys-198 is required for proper function.

The protein resides in the cytoplasm. It is found in the nucleus. It catalyses the reaction L-lysyl-[protein] + acetyl-CoA = N(6)-acetyl-L-lysyl-[protein] + CoA + H(+). Its function is as follows. Component of the mst2 complex which is a highly specific H3 lysine 14 (H3K14) acetyltransferase that functions together with gcn5 to regulate global levels of H3K14 acetylation (H3K14ac), critical for DNA damage checkpoint activation. Negatively regulates telomere silencing. Telomere silencing is increased due to histone hypoacetylation and/or an increase in the ratio of methylated histones to acetylated histones. Telomeric histone acetylation contributes to normal meiotic progression. The sequence is that of Histone acetyltransferase mst2 (mst2) from Schizosaccharomyces pombe (strain 972 / ATCC 24843) (Fission yeast).